The following is a 663-amino-acid chain: Alcohol oxidase 2 (663 aa).

8-38 (DILVLGGGSSGSCIAGRLANLDHSLKVGLIE) contacts FAD. Catalysis depends on His567, which acts as the Proton acceptor. The Microbody targeting signal signature appears at 661–663 (ARF).

It belongs to the GMC oxidoreductase family. In terms of assembly, homooctamer. The cofactor is FAD.

The protein resides in the peroxisome matrix. It carries out the reaction a primary alcohol + O2 = an aldehyde + H2O2. The protein operates within energy metabolism; methane degradation. Functionally, minor isoform of alcohol oxidase, which catalyzes the oxidation of methanol to formaldehyde and hydrogen peroxide, the first step in the methanol utilization pathway of methylotrophic yeasts. This Komagataella phaffii (strain ATCC 76273 / CBS 7435 / CECT 11047 / NRRL Y-11430 / Wegner 21-1) (Yeast) protein is Alcohol oxidase 2 (AOX2).